Reading from the N-terminus, the 522-residue chain is Glucose-1-phosphate adenylyltransferase large subunit, chloroplastic/amyloplastic (522 aa).

Residues 1 to 62 (MSSMQFSSVL…RGPAATGAQC (62 aa)) constitute a chloroplast transit peptide. Over residues 28–42 (SERLKVGDSSSIRHE) the composition is skewed to basic and acidic residues. The tract at residues 28-54 (SERLKVGDSSSIRHERASRRMCNGGRG) is disordered.

The protein belongs to the bacterial/plant glucose-1-phosphate adenylyltransferase family. Heterotetramer. In terms of tissue distribution, abundantly expressed in the whole grains, a slightly less abundant expression is seen in leaves, while a low level expression is seen in the roots. A greater expression is seen in the endosperm than in the embryo and pericarp layers.

The protein localises to the plastid. Its subcellular location is the chloroplast. The protein resides in the amyloplast. The catalysed reaction is alpha-D-glucose 1-phosphate + ATP + H(+) = ADP-alpha-D-glucose + diphosphate. Its pathway is glycan biosynthesis; starch biosynthesis. Insensitive to 3'phosphoglycerate and orthophosphate. Functionally, this protein plays a role in synthesis of starch. It catalyzes the synthesis of the activated glycosyl donor, ADP-glucose from Glc-1-P and ATP. This Triticum aestivum (Wheat) protein is Glucose-1-phosphate adenylyltransferase large subunit, chloroplastic/amyloplastic (AGP-L).